A 555-amino-acid polypeptide reads, in one-letter code: Glutamate--tRNA ligase (555 aa).

The 'HIGH' region motif lies at 100–110 (PNPSGPLHIGH).

It belongs to the class-I aminoacyl-tRNA synthetase family. Glutamate--tRNA ligase type 2 subfamily.

It localises to the cytoplasm. The enzyme catalyses tRNA(Glu) + L-glutamate + ATP = L-glutamyl-tRNA(Glu) + AMP + diphosphate. Catalyzes the attachment of glutamate to tRNA(Glu) in a two-step reaction: glutamate is first activated by ATP to form Glu-AMP and then transferred to the acceptor end of tRNA(Glu). In Methanococcus maripaludis (strain DSM 14266 / JCM 13030 / NBRC 101832 / S2 / LL), this protein is Glutamate--tRNA ligase.